Here is a 209-residue protein sequence, read N- to C-terminus: Ribosomal RNA large subunit methyltransferase E (209 aa).

S-adenosyl-L-methionine is bound by residues glycine 63, tryptophan 65, aspartate 83, aspartate 99, and aspartate 124. Lysine 164 (proton acceptor) is an active-site residue.

This sequence belongs to the class I-like SAM-binding methyltransferase superfamily. RNA methyltransferase RlmE family.

Its subcellular location is the cytoplasm. The catalysed reaction is uridine(2552) in 23S rRNA + S-adenosyl-L-methionine = 2'-O-methyluridine(2552) in 23S rRNA + S-adenosyl-L-homocysteine + H(+). Its function is as follows. Specifically methylates the uridine in position 2552 of 23S rRNA at the 2'-O position of the ribose in the fully assembled 50S ribosomal subunit. The protein is Ribosomal RNA large subunit methyltransferase E of Shewanella putrefaciens (strain CN-32 / ATCC BAA-453).